Reading from the N-terminus, the 66-residue chain is Phylloseptin-Az2 (66 aa).

The N-terminal stretch at 1-22 is a signal peptide; it reads MAFLKKSLFLVLFLGLVSLSIC. Residues 23–44 constitute a propeptide that is removed on maturation; sequence EEEKRETEEKENEQEDDDKSEE. The tract at residues 24 to 45 is disordered; that stretch reads EEKRETEEKENEQEDDDKSEEK. Over residues 31-41 the composition is skewed to acidic residues; it reads EKENEQEDDDK. Phe-65 carries the post-translational modification Phenylalanine amide.

Expressed by the skin glands.

The protein resides in the secreted. Its function is as follows. Has antibacterial activity against the Gram-negative bacteria E.coli ATCC 11775 (MIC=7.2 uM), and the Gram-positive bacteria S.aureus ATCC 12600 (MIC=3.6 uM) and M.luteus ATCC 49732 (MIC=1.8 uM). Does not inhibit the growth of the fungus C.albicans. The polypeptide is Phylloseptin-Az2 (Pithecopus azureus (Orange-legged monkey tree frog)).